The primary structure comprises 449 residues: Type 3 secretion system ATPase (449 aa).

An ATP-binding site is contributed by 178-183 (GCGKTT).

Belongs to the ATPase alpha/beta chains family. T3SS ATPase subfamily. As to quaternary structure, the core secretion machinery of the T3SS is composed of approximately 20 different proteins, including cytoplasmic components, a base, an export apparatus and a needle. This subunit is part of the cytosolic complex. Forms homododecamers.

The protein resides in the cytoplasm. It catalyses the reaction ATP + H2O + cellular proteinSide 1 = ADP + phosphate + cellular proteinSide 2.. Functionally, ATPase component of the type III secretion system (T3SS), also called injectisome, which is used to inject bacterial effector proteins into eukaryotic host cells. Acts as a molecular motor to provide the energy that is required for the export of proteins. Required for type III secretion apparatus (T3SA) formation, proper protein secretion, host cell invasion and virulence. May play a critical role in T3SS substrate recognition, disassembly of the effector/chaperone complex and unfolding of the effector in an ATP-dependent manner prior to secretion. The sequence is that of Type 3 secretion system ATPase from Pseudomonas syringae pv. tomato (strain ATCC BAA-871 / DC3000).